The following is a 160-amino-acid chain: Transcription elongation factor GreA (160 aa).

Residues 11 to 38 (YDRLMKELERLKSERPAIIQAIKEAREE) adopt a coiled-coil conformation.

The protein belongs to the GreA/GreB family.

In terms of biological role, necessary for efficient RNA polymerase transcription elongation past template-encoded arresting sites. The arresting sites in DNA have the property of trapping a certain fraction of elongating RNA polymerases that pass through, resulting in locked ternary complexes. Cleavage of the nascent transcript by cleavage factors such as GreA or GreB allows the resumption of elongation from the new 3'terminus. GreA releases sequences of 2 to 3 nucleotides. The protein is Transcription elongation factor GreA of Nitratidesulfovibrio vulgaris (strain DSM 19637 / Miyazaki F) (Desulfovibrio vulgaris).